Here is a 755-residue protein sequence, read N- to C-terminus: Anaphase-promoting complex subunit 5 (755 aa).

Phosphoserine is present on Ser195. TPR repeat units follow at residues 209–249 (QKQA…FNPD), 250–300 (FAEA…GRSL), 301–337 (RYAA…SNDH), 338–378 (VCLQ…YLAS), 379–418 (LGIQ…SELI), 419–466 (DISI…TESF), 467–500 (AVAL…FPPN), 501–540 (SQHA…ALNS), 541–580 (IEGV…TEMV), 581–620 (ISVL…QYLA), 621–660 (SETV…ILDK), 661–696 (GRAM…NLNE), and 697–736 (AKNY…CAML). Thr232 carries the post-translational modification Phosphothreonine.

Belongs to the APC5 family. As to quaternary structure, the mammalian APC/C is composed at least of 14 distinct subunits ANAPC1, ANAPC2, CDC27/APC3, ANAPC4, ANAPC5, CDC16/APC6, ANAPC7, CDC23/APC8, ANAPC10, ANAPC11, CDC26/APC12, ANAPC13, ANAPC15 and ANAPC16 that assemble into a complex of at least 19 chains with a combined molecular mass of around 1.2 MDa; APC/C interacts with FZR1 and FBXO5.

It localises to the nucleus. It is found in the cytoplasm. The protein resides in the cytoskeleton. Its subcellular location is the spindle. The protein operates within protein modification; protein ubiquitination. Functionally, component of the anaphase promoting complex/cyclosome (APC/C), a cell cycle-regulated E3 ubiquitin ligase that controls progression through mitosis and the G1 phase of the cell cycle. The APC/C complex acts by mediating ubiquitination and subsequent degradation of target proteins: it mainly mediates the formation of 'Lys-11'-linked polyubiquitin chains and, to a lower extent, the formation of 'Lys-48'- and 'Lys-63'-linked polyubiquitin chains. The APC/C complex catalyzes assembly of branched 'Lys-11'-/'Lys-48'-linked branched ubiquitin chains on target proteins. This chain is Anaphase-promoting complex subunit 5 (ANAPC5), found in Homo sapiens (Human).